A 387-amino-acid chain; its full sequence is Glutamate N-acetyltransferase (387 aa).

Substrate contacts are provided by threonine 140, lysine 162, threonine 173, glutamate 257, asparagine 382, and threonine 387. Catalysis depends on threonine 173, which acts as the Nucleophile.

Belongs to the ArgJ family. Heterotetramer of two alpha and two beta chains.

The protein resides in the cytoplasm. The catalysed reaction is N(2)-acetyl-L-ornithine + L-glutamate = N-acetyl-L-glutamate + L-ornithine. It participates in amino-acid biosynthesis; L-arginine biosynthesis; L-ornithine and N-acetyl-L-glutamate from L-glutamate and N(2)-acetyl-L-ornithine (cyclic): step 1/1. In terms of biological role, catalyzes the transfer of the acetyl group from N(2)-acetylornithine to glutamate, forming N-acetylglutamate and L-ornithine. In Methanopyrus kandleri (strain AV19 / DSM 6324 / JCM 9639 / NBRC 100938), this protein is Glutamate N-acetyltransferase.